The chain runs to 187 residues: uncharacterized protein (187 aa).

A helical transmembrane segment spans residues 8–28 (ITFFIILLICLICILLLLVVF). The disordered stretch occupies residues 99–153 (PLENRRDMEAEEENQINEKQEPENAGETGQEEDDGLQKIHTSVTRTPSVVESQKR). Residues 137–149 (IHTSVTRTPSVVE) show a composition bias toward polar residues.

It is found in the membrane. This is an uncharacterized protein from Homo sapiens (Human).